The primary structure comprises 280 residues: Threonylcarbamoyl-AMP synthase (280 aa).

The N-terminal 56 residues, 1–56 (MSTARPCAGLRAAVAAGMGLSDGPAGSSRGCRLLRPPAPAPALPGARLLRLPESEA), are a transit peptide targeting the mitochondrion. Ser-61 is modified (phosphoserine). The YrdC-like domain occupies 68 to 258 (TEALRAAVAE…KFGIIRSGCA (191 aa)).

Belongs to the SUA5 family. Interacts with RSC1A1.

It is found in the cytoplasm. The protein localises to the mitochondrion. Its subcellular location is the cell membrane. It catalyses the reaction L-threonine + hydrogencarbonate + ATP = L-threonylcarbamoyladenylate + diphosphate + H2O. Its function is as follows. Cytoplasmic and mitochondrial threonylcarbamoyl-AMP synthase required for the formation of a threonylcarbamoyl group on adenosine at position 37 (t(6)A37) in tRNAs that read codons beginning with adenine. Catalyzes the conversion of L-threonine, HCO(3)(-)/CO(2) and ATP to give threonylcarbamoyl-AMP (TC-AMP) as the acyladenylate intermediate, with the release of diphosphate. Participates in t(6)A37 formation in cytoplasmic and mitochondrial tRNAs. May regulate the activity of some transporters. The polypeptide is Threonylcarbamoyl-AMP synthase (Rattus norvegicus (Rat)).